We begin with the raw amino-acid sequence, 641 residues long: Mannosyl-oligosaccharide 1,2-alpha-mannosidase IB (641 aa).

An N-acetylthreonine modification is found at Thr-2. The Cytoplasmic portion of the chain corresponds to Thr-2 to Lys-36. The helical; Signal-anchor for type II membrane protein transmembrane segment at Phe-37–Leu-57 threads the bilayer. Residues Pro-58–Arg-641 are Lumenal-facing. A disulfide bond links Cys-462 and Cys-494. Residue Glu-508 is the Proton donor of the active site. Thr-619 contributes to the Ca(2+) binding site. A glycan (N-linked (GlcNAc...) asparagine) is linked at Asn-631.

The protein belongs to the glycosyl hydrolase 47 family. Ca(2+) serves as cofactor.

It localises to the golgi apparatus membrane. The catalysed reaction is N(4)-(alpha-D-Man-(1-&gt;2)-alpha-D-Man-(1-&gt;2)-alpha-D-Man-(1-&gt;3)-[alpha-D-Man-(1-&gt;2)-alpha-D-Man-(1-&gt;3)-[alpha-D-Man-(1-&gt;2)-alpha-D-Man-(1-&gt;6)]-alpha-D-Man-(1-&gt;6)]-beta-D-Man-(1-&gt;4)-beta-D-GlcNAc-(1-&gt;4)-beta-D-GlcNAc)-L-asparaginyl-[protein] (N-glucan mannose isomer 9A1,2,3B1,2,3) + 4 H2O = N(4)-(alpha-D-Man-(1-&gt;3)-[alpha-D-Man-(1-&gt;3)-[alpha-D-Man-(1-&gt;6)]-alpha-D-Man-(1-&gt;6)]-beta-D-Man-(1-&gt;4)-beta-D-GlcNAc-(1-&gt;4)-beta-D-GlcNAc)-L-asparaginyl-[protein] (N-glucan mannose isomer 5A1,2) + 4 beta-D-mannose. It catalyses the reaction N(4)-(alpha-D-Man-(1-&gt;2)-alpha-D-Man-(1-&gt;2)-alpha-D-Man-(1-&gt;3)-[alpha-D-Man-(1-&gt;3)-[alpha-D-Man-(1-&gt;2)-alpha-D-Man-(1-&gt;6)]-alpha-D-Man-(1-&gt;6)]-beta-D-Man-(1-&gt;4)-beta-D-GlcNAc-(1-&gt;4)-beta-D-GlcNAc)-L-asparaginyl-[protein] (N-glucan mannose isomer 8A1,2,3B1,3) + 3 H2O = N(4)-(alpha-D-Man-(1-&gt;3)-[alpha-D-Man-(1-&gt;3)-[alpha-D-Man-(1-&gt;6)]-alpha-D-Man-(1-&gt;6)]-beta-D-Man-(1-&gt;4)-beta-D-GlcNAc-(1-&gt;4)-beta-D-GlcNAc)-L-asparaginyl-[protein] (N-glucan mannose isomer 5A1,2) + 3 beta-D-mannose. It functions in the pathway protein modification; protein glycosylation. Inhibited by both 1-deoxymannojirimycin and kifunensine. Its function is as follows. Involved in the maturation of Asn-linked oligosaccharides. Progressively trim alpha-1,2-linked mannose residues from Man(9)GlcNAc(2) to produce Man(5)GlcNAc(2). In Mus musculus (Mouse), this protein is Mannosyl-oligosaccharide 1,2-alpha-mannosidase IB (Man1a2).